The sequence spans 259 residues: Protein N-terminal and lysine N-methyltransferase efm7 (259 aa).

Residues Trp53, 80 to 82 (GAA), Asp102, Trp138, and Ala164 contribute to the S-adenosyl-L-methionine site.

The protein belongs to the class I-like SAM-binding methyltransferase superfamily. EFM7 family.

The protein localises to the cytoplasm. In terms of biological role, S-adenosyl-L-methionine-dependent protein methyltransferase that trimethylates the N-terminal glycine 'Gly-2' of elongation factor 1-alpha, before also catalyzing the mono- and dimethylation of 'Lys-3'. This chain is Protein N-terminal and lysine N-methyltransferase efm7, found in Emericella nidulans (strain FGSC A4 / ATCC 38163 / CBS 112.46 / NRRL 194 / M139) (Aspergillus nidulans).